Reading from the N-terminus, the 299-residue chain is ATP phosphoribosyltransferase (299 aa).

The protein belongs to the ATP phosphoribosyltransferase family. Long subfamily. Mg(2+) serves as cofactor.

Its subcellular location is the cytoplasm. It catalyses the reaction 1-(5-phospho-beta-D-ribosyl)-ATP + diphosphate = 5-phospho-alpha-D-ribose 1-diphosphate + ATP. It functions in the pathway amino-acid biosynthesis; L-histidine biosynthesis; L-histidine from 5-phospho-alpha-D-ribose 1-diphosphate: step 1/9. Its activity is regulated as follows. Feedback inhibited by histidine. In terms of biological role, catalyzes the condensation of ATP and 5-phosphoribose 1-diphosphate to form N'-(5'-phosphoribosyl)-ATP (PR-ATP). Has a crucial role in the pathway because the rate of histidine biosynthesis seems to be controlled primarily by regulation of HisG enzymatic activity. This is ATP phosphoribosyltransferase from Shewanella sp. (strain ANA-3).